The chain runs to 258 residues: Aspartate/glutamate leucyltransferase (258 aa).

This sequence belongs to the R-transferase family. Bpt subfamily.

Its subcellular location is the cytoplasm. The enzyme catalyses N-terminal L-glutamyl-[protein] + L-leucyl-tRNA(Leu) = N-terminal L-leucyl-L-glutamyl-[protein] + tRNA(Leu) + H(+). It catalyses the reaction N-terminal L-aspartyl-[protein] + L-leucyl-tRNA(Leu) = N-terminal L-leucyl-L-aspartyl-[protein] + tRNA(Leu) + H(+). Functions in the N-end rule pathway of protein degradation where it conjugates Leu from its aminoacyl-tRNA to the N-termini of proteins containing an N-terminal aspartate or glutamate. In Rhizobium etli (strain ATCC 51251 / DSM 11541 / JCM 21823 / NBRC 15573 / CFN 42), this protein is Aspartate/glutamate leucyltransferase.